A 533-amino-acid polypeptide reads, in one-letter code: Acid-sensing ion channel 2 (533 aa).

Residues 1 to 16 (MDLKEACGSEASRETE) show a composition bias toward basic and acidic residues. The segment at 1–23 (MDLKEACGSEASRETESGGMGSL) is disordered. At 1-68 (MDLKEACGSE…STSRRLLWSA (68 aa)) the chain is on the cytoplasmic side. The chain crosses the membrane as a helical span at residues 69-89 (ALLASLVLLVLESTERLAYFL). Topologically, residues 90–445 (SYPHVTSVDA…ETIEQKKAYE (356 aa)) are extracellular. Disulfide bonds link C113–C214, C310–C385, C328–C381, C332–C379, C341–C363, and C343–C355. A glycan (N-linked (GlcNAc...) asparagine) is linked at N163. Residues N386 and N413 are each glycosylated (N-linked (GlcNAc...) asparagine). Residues 446-466 (VAGLLGDIGGQMGLFIGASIL) form a helical membrane-spanning segment. The GAS motif; ion selectivity filter signature appears at 462–464 (GAS). At 467–533 (TLLELFDYAY…TLGTLEEIAC (67 aa)) the chain is on the cytoplasmic side.

The protein belongs to the amiloride-sensitive sodium channel (TC 1.A.6) family. ASIC2 subfamily. Can form homotrimers; probably non-functional. Heterotrimer; could form functional heterotrimers producing channel with specific properties depending on their composition. In terms of tissue distribution, expressed in central nervous system.

Its subcellular location is the cell membrane. It catalyses the reaction Na(+)(in) = Na(+)(out). Inhibited by the diuretic drug amiloride. Functionally, could form pH-gated heterotrimeric sodium channels that act as postsynaptic excitatory sensors in the nervous system, generating rapid, transient inward currents that fully desensitize upon extracellular acidification. This chain is Acid-sensing ion channel 2 (asic2), found in Danio rerio (Zebrafish).